We begin with the raw amino-acid sequence, 133 residues long: Ribosome-binding factor A (133 aa).

Belongs to the RbfA family. In terms of assembly, monomer. Binds 30S ribosomal subunits, but not 50S ribosomal subunits or 70S ribosomes.

The protein localises to the cytoplasm. In terms of biological role, one of several proteins that assist in the late maturation steps of the functional core of the 30S ribosomal subunit. Associates with free 30S ribosomal subunits (but not with 30S subunits that are part of 70S ribosomes or polysomes). Required for efficient processing of 16S rRNA. May interact with the 5'-terminal helix region of 16S rRNA. This chain is Ribosome-binding factor A, found in Psychromonas ingrahamii (strain DSM 17664 / CCUG 51855 / 37).